The sequence spans 347 residues: CRISPR-associated endonuclease Cas1 4 (347 aa).

Positions 1-21 (MNIENEVHIENASESKREPKP) are enriched in basic and acidic residues. The segment at 1–25 (MNIENEVHIENASESKREPKPPEGL) is disordered. Glu-176, His-241, and Glu-256 together coordinate Mn(2+).

This sequence belongs to the CRISPR-associated endonuclease Cas1 family. In terms of assembly, homodimer, forms a heterotetramer with a Cas2 homodimer. Requires Mg(2+) as cofactor. The cofactor is Mn(2+).

Functionally, CRISPR (clustered regularly interspaced short palindromic repeat), is an adaptive immune system that provides protection against mobile genetic elements (viruses, transposable elements and conjugative plasmids). CRISPR clusters contain spacers, sequences complementary to antecedent mobile elements, and target invading nucleic acids. CRISPR clusters are transcribed and processed into CRISPR RNA (crRNA). Acts as a dsDNA endonuclease. Involved in the integration of spacer DNA into the CRISPR cassette. This Methanospirillum hungatei JF-1 (strain ATCC 27890 / DSM 864 / NBRC 100397 / JF-1) protein is CRISPR-associated endonuclease Cas1 4.